The primary structure comprises 455 residues: Regulatory protein LuxO (455 aa).

The 112-residue stretch at 1–112 folds into the Response regulatory domain; the sequence is MVEDTASVAA…RLRVTVNNAI (112 aa). A 4-aspartylphosphate modification is found at D47. The region spanning 132 to 361 is the Sigma-54 factor interaction domain; sequence FIGSSQTMQA…LQNVLRNVVV (230 aa). Residues 160-167 and 223-232 each bind ATP; these read GESGTGKE and ADGGTLFLDE.

In terms of biological role, involved in the regulation of different processes depending on the cell density. Acts together with sigma-54 to repress, perhaps indirectly, some genes. The chain is Regulatory protein LuxO (luxO) from Vibrio cholerae serotype O1 (strain ATCC 39315 / El Tor Inaba N16961).